A 126-amino-acid chain; its full sequence is Holo-[acyl-carrier-protein] synthase (126 aa).

Mg(2+) is bound by residues Asp9 and Glu58.

Belongs to the P-Pant transferase superfamily. AcpS family. The cofactor is Mg(2+).

The protein resides in the cytoplasm. It catalyses the reaction apo-[ACP] + CoA = holo-[ACP] + adenosine 3',5'-bisphosphate + H(+). Functionally, transfers the 4'-phosphopantetheine moiety from coenzyme A to a Ser of acyl-carrier-protein. The sequence is that of Holo-[acyl-carrier-protein] synthase from Escherichia coli O17:K52:H18 (strain UMN026 / ExPEC).